The chain runs to 419 residues: MAHTLAQKILQRHTDEAITDAGQIVRCRVSMVLANDITAPLAIKSFRAMGAKRVFDKDRVALVMDHFTPQKDIEAAQQVKLTREFAREMGVTHYYEGGDCGVEHALLPELGLVGPGDVVVGADSHTCTYGGLGAFATGLGSTDVAGAMALGETWFKVPPTIRATFTGTLPAYVGAKDLILTLIGAIGVDGALYRALEFDGAAIEALDVEGRMTMANMAIEAGGKAGLFAADAKTLTYCTAAGRTGDAAFSADAGAVYERELSFDVTGMTPVVACPHLPDNVKPVSEVKDVTVQQVVIGSCTNGRIGDLREAAAVLRGRKVSRDVRCIVLPATPGIWRQALREGLIETFMEAGCIVGPATCGPCLGGHMGILADGERAIATTNRNFKGRMGSLESEVYLSGPATAAASAVTGVITDPSTL.

[4Fe-4S] cluster contacts are provided by Cys-300, Cys-360, and Cys-363.

Belongs to the aconitase/IPM isomerase family. LeuC type 2 subfamily. As to quaternary structure, heterodimer of LeuC and LeuD. It depends on [4Fe-4S] cluster as a cofactor.

The enzyme catalyses (2R,3S)-3-isopropylmalate = (2S)-2-isopropylmalate. It functions in the pathway amino-acid biosynthesis; L-leucine biosynthesis; L-leucine from 3-methyl-2-oxobutanoate: step 2/4. Functionally, catalyzes the isomerization between 2-isopropylmalate and 3-isopropylmalate, via the formation of 2-isopropylmaleate. In Nitratidesulfovibrio vulgaris (strain DP4) (Desulfovibrio vulgaris), this protein is 3-isopropylmalate dehydratase large subunit.